The primary structure comprises 792 residues: DNA ligase (792 aa).

NAD(+) contacts are provided by residues 42-46 (DAEYD), 91-92 (SL), and glutamate 124. Lysine 126 serves as the catalytic N6-AMP-lysine intermediate. NAD(+) is bound by residues arginine 147, glutamate 189, lysine 306, and lysine 330. Residues cysteine 424, cysteine 426, cysteine 448, and cysteine 454 each coordinate Zn(2+). The region spanning 714-792 (KTDTAVAGKT…EDEWLAMVGG (79 aa)) is the BRCT domain.

Belongs to the NAD-dependent DNA ligase family. LigA subfamily. It depends on Mg(2+) as a cofactor. The cofactor is Mn(2+).

It catalyses the reaction NAD(+) + (deoxyribonucleotide)n-3'-hydroxyl + 5'-phospho-(deoxyribonucleotide)m = (deoxyribonucleotide)n+m + AMP + beta-nicotinamide D-nucleotide.. In terms of biological role, DNA ligase that catalyzes the formation of phosphodiester linkages between 5'-phosphoryl and 3'-hydroxyl groups in double-stranded DNA using NAD as a coenzyme and as the energy source for the reaction. It is essential for DNA replication and repair of damaged DNA. The chain is DNA ligase from Caulobacter sp. (strain K31).